The following is a 166-amino-acid chain: ATP synthase subunit b (166 aa).

A helical membrane pass occupies residues 10–30; that stretch reads LLFWMVIVFGIVFVILAKYGF.

This sequence belongs to the ATPase B chain family. F-type ATPases have 2 components, F(1) - the catalytic core - and F(0) - the membrane proton channel. F(1) has five subunits: alpha(3), beta(3), gamma(1), delta(1), epsilon(1). F(0) has three main subunits: a(1), b(2) and c(10-14). The alpha and beta chains form an alternating ring which encloses part of the gamma chain. F(1) is attached to F(0) by a central stalk formed by the gamma and epsilon chains, while a peripheral stalk is formed by the delta and b chains.

It localises to the cell inner membrane. In terms of biological role, f(1)F(0) ATP synthase produces ATP from ADP in the presence of a proton or sodium gradient. F-type ATPases consist of two structural domains, F(1) containing the extramembraneous catalytic core and F(0) containing the membrane proton channel, linked together by a central stalk and a peripheral stalk. During catalysis, ATP synthesis in the catalytic domain of F(1) is coupled via a rotary mechanism of the central stalk subunits to proton translocation. Functionally, component of the F(0) channel, it forms part of the peripheral stalk, linking F(1) to F(0). In Phocaeicola vulgatus (strain ATCC 8482 / DSM 1447 / JCM 5826 / CCUG 4940 / NBRC 14291 / NCTC 11154) (Bacteroides vulgatus), this protein is ATP synthase subunit b.